A 150-amino-acid polypeptide reads, in one-letter code: Putative antitoxin VapB45 (150 aa).

Residues 124 to 150 (AQRPVAAGRPRPRPQRPVSDRVSDQRR) form a disordered region. Over residues 141–150 (VSDRVSDQRR) the composition is skewed to basic and acidic residues.

Belongs to the phD/YefM antitoxin family.

Its function is as follows. Possibly the antitoxin component of a type II toxin-antitoxin (TA) system. Its cognate toxin is VapC45 (Potential). This Mycobacterium tuberculosis (strain CDC 1551 / Oshkosh) protein is Putative antitoxin VapB45 (vapB45).